A 112-amino-acid chain; its full sequence is Nucleoid-associated protein CA_C0126 (112 aa).

Over residues 93–102 (EEETSGEMKK) the composition is skewed to basic and acidic residues. The segment at 93–112 (EEETSGEMKKLTGGLNIPGL) is disordered.

It belongs to the YbaB/EbfC family. In terms of assembly, homodimer.

Its subcellular location is the cytoplasm. The protein resides in the nucleoid. Functionally, binds to DNA and alters its conformation. May be involved in regulation of gene expression, nucleoid organization and DNA protection. The sequence is that of Nucleoid-associated protein CA_C0126 from Clostridium acetobutylicum (strain ATCC 824 / DSM 792 / JCM 1419 / IAM 19013 / LMG 5710 / NBRC 13948 / NRRL B-527 / VKM B-1787 / 2291 / W).